Consider the following 308-residue polypeptide: D-alanine--D-alanine ligase (308 aa).

The ATP-grasp domain maps to 103 to 302; it reads KFVFRAAGLP…YGELVSWMVE (200 aa). 130–184 is a binding site for ATP; it reads MDPPYVIKPVSEGSSVGVFIVRAGDNRPPAELTSAEWNLGDEVMAERYIAGRELT. Positions 252, 269, and 271 each coordinate Mg(2+).

It belongs to the D-alanine--D-alanine ligase family. It depends on Mg(2+) as a cofactor. Mn(2+) is required as a cofactor.

It localises to the cytoplasm. The enzyme catalyses 2 D-alanine + ATP = D-alanyl-D-alanine + ADP + phosphate + H(+). Its pathway is cell wall biogenesis; peptidoglycan biosynthesis. Cell wall formation. The protein is D-alanine--D-alanine ligase of Parvibaculum lavamentivorans (strain DS-1 / DSM 13023 / NCIMB 13966).